A 145-amino-acid chain; its full sequence is Ribonuclease P protein component (145 aa).

Positions 121–145 (PAAAGTMPPARTVHPSSLSPTEPEL) are disordered. A compositionally biased stretch (polar residues) spans 134-145 (HPSSLSPTEPEL).

This sequence belongs to the RnpA family. As to quaternary structure, consists of a catalytic RNA component (M1 or rnpB) and a protein subunit.

It catalyses the reaction Endonucleolytic cleavage of RNA, removing 5'-extranucleotides from tRNA precursor.. Its function is as follows. RNaseP catalyzes the removal of the 5'-leader sequence from pre-tRNA to produce the mature 5'-terminus. It can also cleave other RNA substrates such as 4.5S RNA. The protein component plays an auxiliary but essential role in vivo by binding to the 5'-leader sequence and broadening the substrate specificity of the ribozyme. The protein is Ribonuclease P protein component of Xanthomonas axonopodis pv. citri (strain 306).